A 567-amino-acid polypeptide reads, in one-letter code: Wee1-like protein kinase 2 (567 aa).

Composition is skewed to basic and acidic residues over residues 1 to 12 (MDDKDIDKELRQ), 25 to 35 (EGQKKVEESRE), 42 to 51 (EKGEVQDSEA), and 64 to 77 (HELD…KESP). The interval 1 to 117 (MDDKDIDKEL…DSPSTPKTML (117 aa)) is disordered. Residue S76 is modified to Phosphoserine. The Nuclear localization signal signature appears at 173–175 (KRK). Residues 212–486 (FLEVEKIGVG…AAALARNTVL (275 aa)) enclose the Protein kinase domain. Residues 218-226 (IGVGEFGTV) and K241 each bind ATP. Residues 315-329 (KLKDILLQISLGLNY) carry the Nuclear export signal motif. Residue D339 is the Proton acceptor of the active site. Positions 344 and 380 each coordinate Mg(2+). Residues 494 to 519 (EELQQQLNLEKFKTATLERELREAQQ) are a coiled coil. The segment at 514–567 (LREAQQAQSPQGYTHHGDTGVSGTHTGSRSTKRLVGGKSARSSSFTSGEREPLH) is disordered.

It belongs to the protein kinase superfamily. Ser/Thr protein kinase family. WEE1 subfamily. Phosphorylated on serine residues. Phosphorylation leads to increase its activity. Expressed in oocytes (at protein level). May also be expressed in testis.

The protein resides in the nucleus. It catalyses the reaction L-tyrosyl-[protein] + ATP = O-phospho-L-tyrosyl-[protein] + ADP + H(+). Functionally, oocyte-specific protein tyrosine kinase that phosphorylates and inhibits CDK1/CDC2 and acts as a key regulator of meiosis during both prophase I and metaphase II. Required to maintain meiotic arrest in oocytes during the germinal vesicle (GV) stage, a long period of quiescence at dictyate prophase I, by phosphorylating CDK1 at 'Tyr-15', leading to inhibit CDK1 activity and prevent meiotic reentry. Also required for metaphase II exit during egg activation by phosphorylating CDK1 at 'Tyr-15', to ensure exit from meiosis in oocytes and promote pronuclear formation. The chain is Wee1-like protein kinase 2 (WEE2) from Homo sapiens (Human).